Consider the following 499-residue polypeptide: Lysine--tRNA ligase (499 aa).

Mg(2+)-binding residues include Glu-408 and Glu-415.

This sequence belongs to the class-II aminoacyl-tRNA synthetase family. In terms of assembly, homodimer. Mg(2+) serves as cofactor.

It is found in the cytoplasm. The catalysed reaction is tRNA(Lys) + L-lysine + ATP = L-lysyl-tRNA(Lys) + AMP + diphosphate. The polypeptide is Lysine--tRNA ligase (Bacillus cereus (strain G9842)).